The following is an 82-amino-acid chain: CLAVATA3/ESR (CLE)-related protein 53 (82 aa).

The first 26 residues, 1–26 (MATSTNSREFLIFICVLTLLVVRSEA), serve as a signal peptide directing secretion. Proline 74 and proline 77 each carry hydroxyproline. Residue proline 77 is glycosylated (O-linked (Ara...) hydroxyproline).

Belongs to the CLV3/ESR signal peptide family. In terms of processing, the O-glycosylation (arabinosylation) of the hydroxyproline Pro-77 enhances binding affinity of the CLE53p peptide for its receptor. In terms of tissue distribution, expressed in root vasculature.

The protein localises to the secreted. It is found in the extracellular space. Functionally, signaling peptide involved in the regulation of root colonization by arbuscular mycorrhizal (AM) fungi. Moves from root to shoot to function with the receptor kinase SUNN, in a signaling pathway that repress strigolactone biosynthetic genes and strigolactone content in the roots, and consequently reduces the promotion of further colonization by AM fungi. This is CLAVATA3/ESR (CLE)-related protein 53 from Medicago truncatula (Barrel medic).